Reading from the N-terminus, the 386-residue chain is MPAPMDSLAAFATDKLAALESQSLRRRLRPTRRTDGVCVERGGRRLVSFSCNDYLGLSHHPAVKAAAAAAIESEGLGAGASRLVTGDNPLLATLERRLAALKGAEAACVFGSGYLANLGIIPTFMGAGDIVLVDELAHACIWGGARLSGAQVISFRHNDVDDLTGKLAAARGSARRALVATDGVFSMDGDIAPLDDISRTAQAWDAWLLVDDAHGLGVVGGGVGVGALFPSARIDLSMGTLSKALGAYGAYVCAAQPVIDLIKSRTRTVVYTTALPPAVAAGALAALDIIITEPKRVAAPRLRARRLTRSLGLPTAESAIVPIVLGDAETALAAAADLERQGLLAVAIRPPTVPANTARLRIACSALHTESQIDDLAAALQPWMQA.

Substrate is bound at residue R26. 113–114 (GY) contacts pyridoxal 5'-phosphate. Substrate is bound at residue H138. Residues S186, 211-214 (DDAH), and 240-243 (TLSK) each bind pyridoxal 5'-phosphate. K243 is modified (N6-(pyridoxal phosphate)lysine). T352 serves as a coordination point for substrate.

It belongs to the class-II pyridoxal-phosphate-dependent aminotransferase family. BioF subfamily. As to quaternary structure, homodimer. Requires pyridoxal 5'-phosphate as cofactor.

The enzyme catalyses 6-carboxyhexanoyl-[ACP] + L-alanine + H(+) = (8S)-8-amino-7-oxononanoate + holo-[ACP] + CO2. It participates in cofactor biosynthesis; biotin biosynthesis. Functionally, catalyzes the decarboxylative condensation of pimeloyl-[acyl-carrier protein] and L-alanine to produce 8-amino-7-oxononanoate (AON), [acyl-carrier protein], and carbon dioxide. This is Putative 8-amino-7-oxononanoate synthase (bioF) from Phenylobacterium zucineum (strain HLK1).